A 563-amino-acid polypeptide reads, in one-letter code: Alpha-humulene synthase (563 aa).

Asp-316, Asp-320, Asp-461, and Glu-469 together coordinate Mg(2+). The short motif at 316–320 is the DDXXD motif element; it reads DDIYD.

Belongs to the terpene synthase family. Tpsa subfamily. Mg(2+) is required as a cofactor. It depends on Mn(2+) as a cofactor. As to expression, expressed in trichomes, cones and young leaves.

The catalysed reaction is (2E,6E)-farnesyl diphosphate = alpha-humulene + diphosphate. It participates in sesquiterpene biosynthesis. Its pathway is secondary metabolite biosynthesis; terpenoid biosynthesis. In terms of biological role, sesquiterpene synthase that catalyzes the formation of alpha-humulene. Can use farnesyl diphosphate (FPP) as substrate, but not geranyl diphosphate (GPP) or geranylgeranyl diphosphate (GGPP). The polypeptide is Alpha-humulene synthase (Humulus lupulus (European hop)).